Consider the following 89-residue polypeptide: Small ribosomal subunit protein uS15 (89 aa).

The segment covering 1–18 has biased composition (basic and acidic residues); it reads MSLDTAEKQKLIENHQVH. Positions 1–23 are disordered; it reads MSLDTAEKQKLIENHQVHPTDTG.

Belongs to the universal ribosomal protein uS15 family. As to quaternary structure, part of the 30S ribosomal subunit. Forms a bridge to the 50S subunit in the 70S ribosome, contacting the 23S rRNA.

Its function is as follows. One of the primary rRNA binding proteins, it binds directly to 16S rRNA where it helps nucleate assembly of the platform of the 30S subunit by binding and bridging several RNA helices of the 16S rRNA. Functionally, forms an intersubunit bridge (bridge B4) with the 23S rRNA of the 50S subunit in the ribosome. This Prochlorococcus marinus (strain MIT 9301) protein is Small ribosomal subunit protein uS15.